We begin with the raw amino-acid sequence, 207 residues long: Uridine kinase (207 aa).

Residue 11-18 (GGSGSGKT) participates in ATP binding.

The protein belongs to the uridine kinase family.

It is found in the cytoplasm. The catalysed reaction is uridine + ATP = UMP + ADP + H(+). The enzyme catalyses cytidine + ATP = CMP + ADP + H(+). The protein operates within pyrimidine metabolism; CTP biosynthesis via salvage pathway; CTP from cytidine: step 1/3. Its pathway is pyrimidine metabolism; UMP biosynthesis via salvage pathway; UMP from uridine: step 1/1. This is Uridine kinase from Staphylococcus aureus (strain Mu3 / ATCC 700698).